Reading from the N-terminus, the 182-residue chain is ATP-dependent protease subunit HslV (182 aa).

Thr12 is an active-site residue. Na(+) contacts are provided by Ala167, Cys170, and Thr173.

It belongs to the peptidase T1B family. HslV subfamily. In terms of assembly, a double ring-shaped homohexamer of HslV is capped on each side by a ring-shaped HslU homohexamer. The assembly of the HslU/HslV complex is dependent on binding of ATP.

The protein localises to the cytoplasm. The enzyme catalyses ATP-dependent cleavage of peptide bonds with broad specificity.. Allosterically activated by HslU binding. In terms of biological role, protease subunit of a proteasome-like degradation complex believed to be a general protein degrading machinery. The polypeptide is ATP-dependent protease subunit HslV (Chlorobium phaeovibrioides (strain DSM 265 / 1930) (Prosthecochloris vibrioformis (strain DSM 265))).